A 522-amino-acid polypeptide reads, in one-letter code: Transactivator/viroplasmin protein (522 aa).

Over residues 111–126 the composition is skewed to polar residues; sequence QGIQIPQKSEPNSSVA. Disordered regions lie at residues 111-133 and 491-522; these read QGIQ…AESG and SADS…KASG.

It belongs to the caulimoviridae viroplasmin family.

It is found in the host cytoplasm. Its function is as follows. Enhances the ribosomal termination-reinitiation event leading to the translation of major open reading frames on the polycistronic viral RNAs. The polypeptide is Transactivator/viroplasmin protein (Arabidopsis thaliana (Mouse-ear cress)).